A 108-amino-acid polypeptide reads, in one-letter code: Putative double-stranded DNA mimic protein PBPRA1522 (108 aa).

It belongs to the putative dsDNA mimic protein family.

May act as a double-stranded DNA (dsDNA) mimic. Probably regulates the activity of a dsDNA-binding protein. The protein is Putative double-stranded DNA mimic protein PBPRA1522 of Photobacterium profundum (strain SS9).